The chain runs to 4307 residues: Cytoplasmic dynein 2 heavy chain 1 (4307 aa).

A stem region spans residues 1-1650 (MANGTADVRK…CVQMVDSEFQ (1650 aa)). 145–152 (LGIVLRRS) contributes to the ATP binding site. Residues 1074-1103 (NTLDKSAKLIKEKKIEFDDLEVTRKKLVDD) are a coiled coil. AAA regions lie at residues 1651–1875 (YTYE…VLRG), 1938–2161 (ELSA…KQND), 2251–2505 (ADDF…WVLG), and 2617–2863 (HYGR…ESCK). ATP is bound by residues 1689–1696 (GPAGTGKT), 1979–1986 (GPSGAGKS), 2291–2298 (GPEGCGKG), and 2655–2662 (GRSGVGRR). The segment at 2881–3169 (AISSSKKKEL…AEVSKAQETI (289 aa)) is stalk. Coiled coils occupy residues 2897-2982 (LQAG…KEVQ), 3109-3200 (LETE…LATL), and 3408-3442 (IQHEKPDLEEQKTKLLQQEEDKKIQLAKLEESLLE). AAA stretches follow at residues 3244–3473 (LCTE…LIQE) and 3690–3905 (MALF…IIDR).

The protein belongs to the dynein heavy chain family. As to quaternary structure, the cytoplasmic dynein complex 2 is probably composed by a heavy chain DYNC2H1 homodimer and a number of DYNC2LI1 light intermediate chains.

It localises to the cytoplasm. The protein resides in the cytoskeleton. The protein localises to the cilium axoneme. It is found in the cell membrane. May function as a motor for intraflagellar retrograde transport. Functions in cilia biogenesis. May play a role in transport between endoplasmic reticulum and Golgi or organization of the Golgi in cells. This is Cytoplasmic dynein 2 heavy chain 1 (DYNC2H1) from Homo sapiens (Human).